Reading from the N-terminus, the 246-residue chain is Protein phosphatase PhpP (246 aa).

Residues 2–240 (EISLLTDVGQ…DNITVALVSM (239 aa)) form the PPM-type phosphatase domain. Positions 36, 37, 192, and 231 each coordinate Mn(2+).

It belongs to the PP2C family. Interacts with the kinase domain of StkP. Requires Mn(2+) as cofactor.

It is found in the cytoplasm. The enzyme catalyses O-phospho-L-seryl-[protein] + H2O = L-seryl-[protein] + phosphate. It catalyses the reaction O-phospho-L-threonyl-[protein] + H2O = L-threonyl-[protein] + phosphate. Its activity is regulated as follows. Phosphatase activity is inhibited by NaF but not by okadaic acid. Functionally, protein phosphatase able to dephosphorylate StkP-P and a phosphothreonine residue in a phosphopeptide synthetic substrate. PhpP and its cognate protein kinase StkP appear to constitute a functional signaling couple in vivo, PhpP's primary role probably being to control phosphorylation levels of StkP and of its targets (which include LocZ, DivIVA and KhpB (also called EloR/Jag)). PhpP thus performs an essential control of StkP activity. Overexpression confers an stkP deletion-like phenotype. This is Protein phosphatase PhpP (phpP) from Streptococcus pneumoniae.